A 293-amino-acid polypeptide reads, in one-letter code: 4-diphosphocytidyl-2-C-methyl-D-erythritol kinase (293 aa).

Residue Lys-16 is part of the active site. Position 99–109 (99–109 (PMGAGLGGGSS)) interacts with ATP. Residue Asp-141 is part of the active site.

It belongs to the GHMP kinase family. IspE subfamily.

The enzyme catalyses 4-CDP-2-C-methyl-D-erythritol + ATP = 4-CDP-2-C-methyl-D-erythritol 2-phosphate + ADP + H(+). It functions in the pathway isoprenoid biosynthesis; isopentenyl diphosphate biosynthesis via DXP pathway; isopentenyl diphosphate from 1-deoxy-D-xylulose 5-phosphate: step 3/6. Its function is as follows. Catalyzes the phosphorylation of the position 2 hydroxy group of 4-diphosphocytidyl-2C-methyl-D-erythritol. This Burkholderia thailandensis (strain ATCC 700388 / DSM 13276 / CCUG 48851 / CIP 106301 / E264) protein is 4-diphosphocytidyl-2-C-methyl-D-erythritol kinase.